We begin with the raw amino-acid sequence, 417 residues long: Multifunctional CCA protein (417 aa).

ATP contacts are provided by glycine 8 and arginine 11. Glycine 8 and arginine 11 together coordinate CTP. Mg(2+) contacts are provided by aspartate 21 and aspartate 23. ATP is bound by residues arginine 91, arginine 137, and arginine 140. CTP contacts are provided by arginine 91, arginine 137, and arginine 140. The HD domain occupies 225–326; the sequence is SGIHTLMTLQ…LNVLKKTDAF (102 aa).

It belongs to the tRNA nucleotidyltransferase/poly(A) polymerase family. Bacterial CCA-adding enzyme type 1 subfamily. In terms of assembly, monomer. Can also form homodimers and oligomers. Mg(2+) is required as a cofactor. Requires Ni(2+) as cofactor.

It carries out the reaction a tRNA precursor + 2 CTP + ATP = a tRNA with a 3' CCA end + 3 diphosphate. It catalyses the reaction a tRNA with a 3' CCA end + 2 CTP + ATP = a tRNA with a 3' CCACCA end + 3 diphosphate. Its function is as follows. Catalyzes the addition and repair of the essential 3'-terminal CCA sequence in tRNAs without using a nucleic acid template. Adds these three nucleotides in the order of C, C, and A to the tRNA nucleotide-73, using CTP and ATP as substrates and producing inorganic pyrophosphate. tRNA 3'-terminal CCA addition is required both for tRNA processing and repair. Also involved in tRNA surveillance by mediating tandem CCA addition to generate a CCACCA at the 3' terminus of unstable tRNAs. While stable tRNAs receive only 3'-terminal CCA, unstable tRNAs are marked with CCACCA and rapidly degraded. The chain is Multifunctional CCA protein from Neisseria meningitidis serogroup C (strain 053442).